The chain runs to 578 residues: NADPH oxidase 4 (578 aa).

The Cytoplasmic portion of the chain corresponds to methionine 1 to histidine 16. Residues leucine 17–tyrosine 37 traverse the membrane as a helical segment. Residues asparagine 38–serine 62 lie on the Extracellular side of the membrane. The Ferric oxidoreductase domain maps to arginine 58 to isoleucine 303. Residues valine 63–leucine 83 traverse the membrane as a helical segment. Topologically, residues arginine 84–leucine 104 are cytoplasmic. Residues histidine 105–valine 125 traverse the membrane as a helical segment. Topologically, residues asparagine 126–leucine 154 are extracellular. The N-linked (GlcNAc...) asparagine glycan is linked to asparagine 133. The helical transmembrane segment at leucine 155–valine 175 threads the bilayer. Over threonine 176–aspartate 188 the chain is Cytoplasmic. Residues isoleucine 189–serine 209 traverse the membrane as a helical segment. Over glycine 210–glutamate 424 the chain is Extracellular. Residues asparagine 218–glutamate 273 form an E-loop; essential for H2O2 generating catalytic activity region. The interval histidine 248 to glutamate 575 is mediates interaction with TLR4. Residues arginine 304–glutamate 419 enclose the FAD-binding FR-type domain. A helical membrane pass occupies residues valine 425–leucine 445. Residues leucine 446–serine 578 lie on the Cytoplasmic side of the membrane.

As to quaternary structure, interacts with TLR4. Interacts with, relocalizes and stabilizes CYBA/p22phox. Interacts with protein disulfide isomerase. Interacts with PPP1R15A. Interacts with LRRC8A; this interaction prevents the ubiquitin-mediated degradation of LRRC8A. Heme is required as a cofactor. In terms of processing, N-glycosylation is required for the function. Expressed in vascular smooth muscle.

It is found in the cytoplasm. The protein resides in the endoplasmic reticulum membrane. It localises to the cell membrane. Its subcellular location is the cell junction. The protein localises to the focal adhesion. It is found in the nucleus. It catalyses the reaction NADPH + 2 O2 = 2 superoxide + NADP(+) + H(+). It carries out the reaction NADPH + O2 + H(+) = H2O2 + NADP(+). Its activity is regulated as follows. Activated by insulin. Inhibited by diphenylene iodonium. Inhibited by plumbagin. Activated by phorbol 12-myristate 13-acetate (PMA). In terms of biological role, NADPH oxidase that catalyzes predominantly the reduction of oxygen to H2O2. Can also catalyze to a smaller extent, the reduction of oxygen to superoxide. May function as an oxygen sensor regulating the KCNK3/TASK-1 potassium channel and HIF1A activity. May regulate insulin signaling cascade. May play a role in apoptosis, bone resorption and lipolysaccharide-mediated activation of NFKB. May produce superoxide in the nucleus and play a role in regulating gene expression upon cell stimulation. Promotes ferroptosis, reactive oxygen species production and reduced glutathione (GSH) levels by activating NLRP3 inflammasome activation and cytokine release. This is NADPH oxidase 4 (Nox4) from Rattus norvegicus (Rat).